The sequence spans 267 residues: Methyl-coenzyme M reductase II subunit gamma (267 aa).

A coenzyme M-binding site is contributed by R123.

It belongs to the methyl-coenzyme M reductase gamma subunit family. MCR is a hexamer of two alpha, two beta, and two gamma chains, forming a dimer of heterotrimers. Coenzyme F430 serves as cofactor.

The enzyme catalyses coenzyme B + methyl-coenzyme M = methane + coenzyme M-coenzyme B heterodisulfide. It functions in the pathway one-carbon metabolism; methyl-coenzyme M reduction; methane from methyl-coenzyme M: step 1/1. Its function is as follows. Component of the methyl-coenzyme M reductase (MCR) I that catalyzes the reductive cleavage of methyl-coenzyme M (CoM-S-CH3 or 2-(methylthio)ethanesulfonate) using coenzyme B (CoB or 7-mercaptoheptanoylthreonine phosphate) as reductant which results in the production of methane and the mixed heterodisulfide of CoB and CoM (CoM-S-S-CoB). This is the final step in methanogenesis. The protein is Methyl-coenzyme M reductase II subunit gamma (mrtG) of Methanothermus fervidus (strain ATCC 43054 / DSM 2088 / JCM 10308 / V24 S).